Reading from the N-terminus, the 20-residue chain is Alanine aminotransferase 1 (20 aa).

Lysine 11 is modified (N6-(pyridoxal phosphate)lysine). Residue lysine 11 is glycosylated (N-linked (Glc) (glycation) lysine; in vitro).

This sequence belongs to the class-I pyridoxal-phosphate-dependent aminotransferase family. Alanine aminotransferase subfamily. As to quaternary structure, homodimer. Pyridoxal 5'-phosphate is required as a cofactor. Glycation of Lys-11 inactivates the enzyme.

The protein localises to the cytoplasm. It carries out the reaction L-alanine + 2-oxoglutarate = pyruvate + L-glutamate. Its pathway is amino-acid degradation; L-alanine degradation via transaminase pathway; pyruvate from L-alanine: step 1/1. In terms of biological role, catalyzes the reversible transamination between alanine and 2-oxoglutarate to form pyruvate and glutamate. Participates in cellular nitrogen metabolism and also in liver gluconeogenesis starting with precursors transported from skeletal muscles. The sequence is that of Alanine aminotransferase 1 (GPT) from Sus scrofa (Pig).